Consider the following 284-residue polypeptide: Diaminopimelate epimerase (284 aa).

2 residues coordinate substrate: N13 and N70. The active-site Proton donor is the C79. Residues G80–N81, N167, N200, and E218–R219 contribute to the substrate site. The active-site Proton acceptor is C227. G228 to T229 is a binding site for substrate.

It belongs to the diaminopimelate epimerase family. In terms of assembly, homodimer.

It localises to the cytoplasm. The catalysed reaction is (2S,6S)-2,6-diaminopimelate = meso-2,6-diaminopimelate. The protein operates within amino-acid biosynthesis; L-lysine biosynthesis via DAP pathway; DL-2,6-diaminopimelate from LL-2,6-diaminopimelate: step 1/1. Its function is as follows. Catalyzes the stereoinversion of LL-2,6-diaminopimelate (L,L-DAP) to meso-diaminopimelate (meso-DAP), a precursor of L-lysine and an essential component of the bacterial peptidoglycan. The protein is Diaminopimelate epimerase of Prochlorococcus marinus (strain NATL1A).